The sequence spans 63 residues: Large ribosomal subunit protein uL29 (63 aa).

The protein belongs to the universal ribosomal protein uL29 family.

In Proteus mirabilis (strain HI4320), this protein is Large ribosomal subunit protein uL29.